The following is a 272-amino-acid chain: Tryptophan synthase alpha chain (272 aa).

Catalysis depends on proton acceptor residues glutamate 49 and aspartate 60.

The protein belongs to the TrpA family. As to quaternary structure, tetramer of two alpha and two beta chains.

The catalysed reaction is (1S,2R)-1-C-(indol-3-yl)glycerol 3-phosphate + L-serine = D-glyceraldehyde 3-phosphate + L-tryptophan + H2O. The protein operates within amino-acid biosynthesis; L-tryptophan biosynthesis; L-tryptophan from chorismate: step 5/5. Its function is as follows. The alpha subunit is responsible for the aldol cleavage of indoleglycerol phosphate to indole and glyceraldehyde 3-phosphate. The chain is Tryptophan synthase alpha chain from Hydrogenovibrio crunogenus (strain DSM 25203 / XCL-2) (Thiomicrospira crunogena).